The sequence spans 143 residues: Phosphoribosyl-AMP cyclohydrolase (143 aa).

Aspartate 86 contacts Mg(2+). Residue cysteine 87 coordinates Zn(2+). Mg(2+) is bound by residues aspartate 88 and aspartate 90. Zn(2+) contacts are provided by cysteine 103 and cysteine 110.

Belongs to the PRA-CH family. In terms of assembly, homodimer. Mg(2+) serves as cofactor. Zn(2+) is required as a cofactor.

It is found in the cytoplasm. The catalysed reaction is 1-(5-phospho-beta-D-ribosyl)-5'-AMP + H2O = 1-(5-phospho-beta-D-ribosyl)-5-[(5-phospho-beta-D-ribosylamino)methylideneamino]imidazole-4-carboxamide. Its pathway is amino-acid biosynthesis; L-histidine biosynthesis; L-histidine from 5-phospho-alpha-D-ribose 1-diphosphate: step 3/9. Functionally, catalyzes the hydrolysis of the adenine ring of phosphoribosyl-AMP. This Rhodospirillum rubrum (strain ATCC 11170 / ATH 1.1.1 / DSM 467 / LMG 4362 / NCIMB 8255 / S1) protein is Phosphoribosyl-AMP cyclohydrolase.